The following is a 194-amino-acid chain: Probable GTP-binding protein EngB (194 aa).

The 173-residue stretch at 22-194 (KIPQIAIVGK…LRIFEEVIEK (173 aa)) folds into the EngB-type G domain. GTP-binding positions include 30 to 37 (GKSNVGKS), 57 to 61 (GKTRG), 75 to 78 (DLPG), 142 to 145 (TKAD), and 173 to 175 (FSA). Mg(2+) is bound by residues S37 and T59.

The protein belongs to the TRAFAC class TrmE-Era-EngA-EngB-Septin-like GTPase superfamily. EngB GTPase family. The cofactor is Mg(2+).

In terms of biological role, necessary for normal cell division and for the maintenance of normal septation. The chain is Probable GTP-binding protein EngB from Caldanaerobacter subterraneus subsp. tengcongensis (strain DSM 15242 / JCM 11007 / NBRC 100824 / MB4) (Thermoanaerobacter tengcongensis).